The sequence spans 162 residues: Ribosome maturation factor RimM (162 aa).

The PRC barrel domain occupies 86-160 (EGRYYYFALI…GIHVDPIPGL (75 aa)).

The protein belongs to the RimM family. As to quaternary structure, binds ribosomal protein uS19.

The protein resides in the cytoplasm. In terms of biological role, an accessory protein needed during the final step in the assembly of 30S ribosomal subunit, possibly for assembly of the head region. Essential for efficient processing of 16S rRNA. May be needed both before and after RbfA during the maturation of 16S rRNA. It has affinity for free ribosomal 30S subunits but not for 70S ribosomes. This chain is Ribosome maturation factor RimM, found in Thermus thermophilus (strain ATCC BAA-163 / DSM 7039 / HB27).